We begin with the raw amino-acid sequence, 986 residues long: Vacuolar membrane protease (986 aa).

Over 1–16 the chain is Cytoplasmic; that stretch reads MAPLRLSRANPLAFAR. The chain crosses the membrane as a helical span at residues 17-37; it reads WPVTLITAVVYLAFLIPLLIV. Residues 38–392 are Vacuolar-facing; that stretch reads HHVVPSPPTA…TTFVLFELHT (355 aa). Asparagine 121 carries N-linked (GlcNAc...) asparagine glycosylation. Positions 176 and 188 each coordinate Zn(2+). Glutamate 222 (proton acceptor) is an active-site residue. Zn(2+)-binding residues include glutamate 223, glutamate 248, and histidine 321. The helical transmembrane segment at 393–413 threads the bilayer; the sequence is LFALSVTLLVVAPLALLVTGI. At 414–444 the chain is on the cytoplasmic side; it reads ALTRADKMYLFRTSAKADESLDSVPLQGLRG. Residues 445 to 465 traverse the membrane as a helical segment; the sequence is FFRFPFLFAIPTAVTVGLAYL. Topologically, residues 466-475 are vacuolar; the sequence is VTKVNPLIIH. The chain crosses the membrane as a helical span at residues 476 to 496; that stretch reads SSEYAVWSMMLSAWTFLAWFV. Over 497-510 the chain is Cytoplasmic; the sequence is SRMADFARPTALHR. A helical membrane pass occupies residues 511–531; that stretch reads IYTLTWMFVLAWVLLVISTVY. The Vacuolar portion of the chain corresponds to 532–535; the sequence is QNQR. Residues 536 to 556 form a helical membrane-spanning segment; that stretch reads GLAGSYSVFFFFSGTFLATWI. Residues 557–668 are Cytoplasmic-facing; it reads SYLELFSLPR…SASLPTWTWT (112 aa). Residues 573–585 show a composition bias toward polar residues; that stretch reads QNRPTSRRASSYG. A disordered region spans residues 573 to 622; the sequence is QNRPTSRRASSYGGSRLGTASGEDHEEDDHDAEEEEEEQEPTESTSLLGG. Acidic residues predominate over residues 596–613; sequence DHEEDDHDAEEEEEEQEP. Residues 669 to 689 traverse the membrane as a helical segment; sequence LQFLLMAPLVLIMVGPLALLL. Residues 690 to 704 lie on the Vacuolar side of the membrane; that stretch reads TSALHQTGQDGSSSL. Residues 705-725 traverse the membrane as a helical segment; it reads FIYVAIAALTTFLLTPLLPFI. The Cytoplasmic portion of the chain corresponds to 726–732; that stretch reads HRHTYHL. A helical membrane pass occupies residues 733–753; sequence PVFLLLVFLGTLIYNLVAFPF. Residues 754 to 986 are Vacuolar-facing; the sequence is SPTNRLKLFF…LVEGWKGFSI (233 aa). Asparagine 799, asparagine 840, and asparagine 948 each carry an N-linked (GlcNAc...) asparagine glycan. The interval 840-859 is disordered; that stretch reads NTTDDKEGDEDTHHPRKARI.

It belongs to the peptidase M28 family. Zn(2+) serves as cofactor.

It localises to the vacuole membrane. May be involved in vacuolar sorting and osmoregulation. The chain is Vacuolar membrane protease from Aspergillus niger (strain ATCC MYA-4892 / CBS 513.88 / FGSC A1513).